The following is a 329-amino-acid chain: GTP 3',8-cyclase (329 aa).

Positions 1 to 229 (MNPVDYLRIS…TAFVQGNGPA (229 aa)) constitute a Radical SAM core domain. A GTP-binding site is contributed by R8. [4Fe-4S] cluster is bound by residues C15 and C19. An S-adenosyl-L-methionine-binding site is contributed by Y21. C22 lines the [4Fe-4S] cluster pocket. R60 lines the GTP pocket. An S-adenosyl-L-methionine-binding site is contributed by G64. T91 contacts GTP. S-adenosyl-L-methionine is bound at residue S115. K155 lines the GTP pocket. M189 is a binding site for S-adenosyl-L-methionine. [4Fe-4S] cluster is bound by residues C252 and C255. 257 to 259 (RMR) is a GTP binding site. C269 lines the [4Fe-4S] cluster pocket.

Belongs to the radical SAM superfamily. MoaA family. Monomer and homodimer. [4Fe-4S] cluster serves as cofactor.

It catalyses the reaction GTP + AH2 + S-adenosyl-L-methionine = (8S)-3',8-cyclo-7,8-dihydroguanosine 5'-triphosphate + 5'-deoxyadenosine + L-methionine + A + H(+). The protein operates within cofactor biosynthesis; molybdopterin biosynthesis. Catalyzes the cyclization of GTP to (8S)-3',8-cyclo-7,8-dihydroguanosine 5'-triphosphate. In Picosynechococcus sp. (strain ATCC 27264 / PCC 7002 / PR-6) (Agmenellum quadruplicatum), this protein is GTP 3',8-cyclase.